Here is a 438-residue protein sequence, read N- to C-terminus: GTPase Der (438 aa).

EngA-type G domains are found at residues 4–168 (PLVT…KSEG) and 177–352 (IKIA…DNYS). GTP contacts are provided by residues 10–17 (GRPNVGKS), 57–61 (DTGGI), 120–123 (NKID), 183–190 (GKPNVGKS), 230–234 (DTAGL), and 295–298 (NKWD). Positions 353 to 437 (KRIATGVLND…GIKMIFKERK (85 aa)) constitute a KH-like domain.

Belongs to the TRAFAC class TrmE-Era-EngA-EngB-Septin-like GTPase superfamily. EngA (Der) GTPase family. In terms of assembly, associates with the 50S ribosomal subunit.

GTPase that plays an essential role in the late steps of ribosome biogenesis. The sequence is that of GTPase Der from Clostridium acetobutylicum (strain ATCC 824 / DSM 792 / JCM 1419 / IAM 19013 / LMG 5710 / NBRC 13948 / NRRL B-527 / VKM B-1787 / 2291 / W).